We begin with the raw amino-acid sequence, 536 residues long: CTP synthase (536 aa).

An amidoligase domain region spans residues 1-267; that stretch reads MSKFVFVTGG…CKQTLNCLEL (267 aa). Serine 13 contributes to the CTP binding site. Serine 13 serves as a coordination point for UTP. ATP is bound by residues 14–19 and aspartate 71; that span reads SIGKGI. Aspartate 71 and glutamate 141 together coordinate Mg(2+). CTP is bound by residues 148-150, 188-193, and lysine 224; these read DIE and KTKPTQ. UTP contacts are provided by residues 188-193 and lysine 224; that span reads KTKPTQ. One can recognise a Glutamine amidotransferase type-1 domain in the interval 292 to 534; it reads KVALVGKYIE…IKASQEKLEQ (243 aa). Glycine 354 is a binding site for L-glutamine. Cysteine 381 (nucleophile; for glutamine hydrolysis) is an active-site residue. L-glutamine-binding positions include 382-385, glutamate 405, and arginine 462; that span reads LGMQ. Residues histidine 507 and glutamate 509 contribute to the active site.

Belongs to the CTP synthase family. Homotetramer.

It catalyses the reaction UTP + L-glutamine + ATP + H2O = CTP + L-glutamate + ADP + phosphate + 2 H(+). The enzyme catalyses L-glutamine + H2O = L-glutamate + NH4(+). The catalysed reaction is UTP + NH4(+) + ATP = CTP + ADP + phosphate + 2 H(+). Its pathway is pyrimidine metabolism; CTP biosynthesis via de novo pathway; CTP from UDP: step 2/2. Allosterically activated by GTP, when glutamine is the substrate; GTP has no effect on the reaction when ammonia is the substrate. The allosteric effector GTP functions by stabilizing the protein conformation that binds the tetrahedral intermediate(s) formed during glutamine hydrolysis. Inhibited by the product CTP, via allosteric rather than competitive inhibition. Catalyzes the ATP-dependent amination of UTP to CTP with either L-glutamine or ammonia as the source of nitrogen. Regulates intracellular CTP levels through interactions with the four ribonucleotide triphosphates. The protein is CTP synthase of Prochlorococcus marinus subsp. pastoris (strain CCMP1986 / NIES-2087 / MED4).